Reading from the N-terminus, the 619-residue chain is Long-chain fatty acid transport protein 6 (619 aa).

The next 2 membrane-spanning stretches (helical) occupy residues 22 to 42 (LLFPYFWDDFWYLLKVVRYGI) and 119 to 139 (VHVWFGLAKLGCVVAFLNSNL). 221–232 (YIFTSGTTGLPK) contacts AMP.

The protein belongs to the ATP-dependent AMP-binding enzyme family.

Its subcellular location is the cell membrane. The protein resides in the sarcolemma. The enzyme catalyses a fatty acid(in) = a fatty acid(out). It carries out the reaction hexadecanoate(out) = hexadecanoate(in). It catalyses the reaction (9Z,12Z)-octadecadienoate(out) = (9Z,12Z)-octadecadienoate(in). The catalysed reaction is (9Z)-octadecenoate(out) = (9Z)-octadecenoate(in). The enzyme catalyses a very long-chain fatty acid + ATP + CoA = a very long-chain fatty acyl-CoA + AMP + diphosphate. It carries out the reaction tetracosanoate + ATP + CoA = tetracosanoyl-CoA + AMP + diphosphate. It catalyses the reaction a long-chain fatty acid + ATP + CoA = a long-chain fatty acyl-CoA + AMP + diphosphate. The catalysed reaction is (9Z)-octadecenoate + ATP + CoA = (9Z)-octadecenoyl-CoA + AMP + diphosphate. The enzyme catalyses (5Z,8Z,11Z,14Z)-eicosatetraenoate + ATP + CoA = (5Z,8Z,11Z,14Z)-eicosatetraenoyl-CoA + AMP + diphosphate. Mediates the import of long-chain fatty acids (LCFA) into the cell by facilitating their transport at the plasma membrane. Also functions as an acyl-CoA ligase catalyzing the ATP-dependent formation of fatty acyl-CoA using LCFA and very-long-chain fatty acids (VLCFA) as substrates. Plays a pivotal role in regulating available LCFA substrates from exogenous sources in tissues undergoing high levels of beta-oxidation such as the heart. The polypeptide is Long-chain fatty acid transport protein 6 (Slc27a6) (Mus musculus (Mouse)).